A 267-amino-acid polypeptide reads, in one-letter code: Tryptophan synthase alpha chain (267 aa).

Active-site proton acceptor residues include Glu-49 and Asp-60.

Belongs to the TrpA family. Tetramer of two alpha and two beta chains.

The catalysed reaction is (1S,2R)-1-C-(indol-3-yl)glycerol 3-phosphate + L-serine = D-glyceraldehyde 3-phosphate + L-tryptophan + H2O. It participates in amino-acid biosynthesis; L-tryptophan biosynthesis; L-tryptophan from chorismate: step 5/5. In terms of biological role, the alpha subunit is responsible for the aldol cleavage of indoleglycerol phosphate to indole and glyceraldehyde 3-phosphate. The protein is Tryptophan synthase alpha chain of Citrifermentans bemidjiense (strain ATCC BAA-1014 / DSM 16622 / JCM 12645 / Bem) (Geobacter bemidjiensis).